The following is a 152-amino-acid chain: Serglycin (152 aa).

The N-terminal stretch at 1-25 (MQVPVGSRLVLALAFVLVWGSSVQG) is a signal peptide. The propeptide at 26–74 (YPARRARYQWVRCKPNGFFANCIEEKGPQFDLIDESNNIGPPMNNPVLM) is activation peptide. Residues Cys-38 and Cys-47 are joined by a disulfide bond. The disordered stretch occupies residues 66–115 (PPMNNPVLMEGPSKDFISNYDDYGSGSGSGSGSGSGSGSGSGSGFLGDME). Repeat copies occupy residues 89 to 90 (GS), 91 to 92 (GS), 93 to 94 (GS), 95 to 96 (GS), 97 to 98 (GS), 99 to 100 (GS), 101 to 102 (GS), 103 to 104 (GS), 105 to 106 (GS), and 107 to 108 (GS). Residues 89–108 (GSGSGSGSGSGSGSGSGSGS) form a 10 X 2 AA tandem repeats of G-S region. Positions 90–110 (SGSGSGSGSGSGSGSGSGSGF) are enriched in gly residues. Ser-92 and Ser-94 each carry an O-linked (Xyl...) (glycosaminoglycan) serine glycan. 6 O-linked (Xyl...) (glycosaminoglycan) serine glycosylation sites follow: Ser-98, Ser-100, Ser-102, Ser-104, Ser-106, and Ser-108.

It belongs to the serglycin family. Binds to activated CD44 and to GZMB. Post-translationally, O-glycosylated; contains chondroitin sulfate and heparan sulfate.

The protein localises to the cytoplasmic granule. It is found in the cytolytic granule. It localises to the secreted. The protein resides in the extracellular space. Its subcellular location is the golgi apparatus. Plays a role in formation of mast cell secretory granules and mediates storage of various compounds in secretory vesicles. Required for storage of some proteases in both connective tissue and mucosal mast cells and for storage of granzyme B in T-lymphocytes. Plays a role in localizing neutrophil elastase in azurophil granules of neutrophils. Mediates processing of MMP2. Plays a role in cytotoxic cell granule-mediated apoptosis by forming a complex with granzyme B which is delivered to cells by perforin to induce apoptosis. Regulates the secretion of TNF-alpha and may also regulate protease secretion. Inhibits bone mineralization. The polypeptide is Serglycin (Srgn) (Mus musculus (Mouse)).